The chain runs to 265 residues: NAD-capped RNA hydrolase NudC (265 aa).

Residue Arg76 coordinates substrate. 4 residues coordinate Zn(2+): Cys106, Cys109, Cys124, and Cys127. A substrate-binding site is contributed by Tyr132. The Nudix hydrolase domain occupies 133–256; sequence PRISPAMMVL…SIAHRLIRHA (124 aa). 3 residues coordinate a divalent metal cation: Ala166, Glu182, and Glu186. The Nudix box motif lies at 167-188; that stretch reads GFVEPGETLEECVHRETWEEVG. 200-207 contributes to the substrate binding site; the sequence is QSWPFPHS. Glu227 is an a divalent metal cation binding site. Ala249 lines the substrate pocket.

This sequence belongs to the Nudix hydrolase family. NudC subfamily. As to quaternary structure, homodimer. Mg(2+) is required as a cofactor. It depends on Mn(2+) as a cofactor. The cofactor is Zn(2+).

The enzyme catalyses a 5'-end NAD(+)-phospho-ribonucleoside in mRNA + H2O = a 5'-end phospho-adenosine-phospho-ribonucleoside in mRNA + beta-nicotinamide D-ribonucleotide + 2 H(+). It catalyses the reaction NAD(+) + H2O = beta-nicotinamide D-ribonucleotide + AMP + 2 H(+). The catalysed reaction is NADH + H2O = reduced beta-nicotinamide D-ribonucleotide + AMP + 2 H(+). MRNA decapping enzyme that specifically removes the nicotinamide adenine dinucleotide (NAD) cap from a subset of mRNAs by hydrolyzing the diphosphate linkage to produce nicotinamide mononucleotide (NMN) and 5' monophosphate mRNA. The NAD-cap is present at the 5'-end of some mRNAs and stabilizes RNA against 5'-processing. Has preference for mRNAs with a 5'-end purine. Catalyzes the hydrolysis of a broad range of dinucleotide pyrophosphates. This Chromobacterium violaceum (strain ATCC 12472 / DSM 30191 / JCM 1249 / CCUG 213 / NBRC 12614 / NCIMB 9131 / NCTC 9757 / MK) protein is NAD-capped RNA hydrolase NudC.